We begin with the raw amino-acid sequence, 576 residues long: Protein alan shepard (576 aa).

Over residues M1 to Q12 the composition is skewed to pro residues. Residues M1–P66 are disordered. Position 5 is a phosphotyrosine (Y5). Residues Q13–Q24 are compositionally biased toward low complexity. Over residues Q25–M35 the composition is skewed to gly residues. Polar residues predominate over residues G37–Y54. The segment covering S55–P66 has biased composition (low complexity). Residues Y125 and Y142 each carry the phosphotyrosine modification. The segment at P164–G225 is disordered. Over residues S178–G225 the composition is skewed to low complexity. RRM domains are found at residues T231–Q302 and T308–G387. The interval Y538–K576 is disordered.

Its function is as follows. Has a role in the perception of gravity. In Drosophila simulans (Fruit fly), this protein is Protein alan shepard.